A 149-amino-acid polypeptide reads, in one-letter code: UPF0178 protein VF_0601 (149 aa).

Belongs to the UPF0178 family.

This chain is UPF0178 protein VF_0601, found in Aliivibrio fischeri (strain ATCC 700601 / ES114) (Vibrio fischeri).